The chain runs to 40 residues: Dolichyl-diphosphooligosaccharide--protein glycosyltransferase subunit 4 (40 aa).

The Lumenal portion of the chain corresponds to 1–4; the sequence is MITD. A helical membrane pass occupies residues 5–25; sequence VQLAIFSNVLGVFLFLLVVAY. Topologically, residues 26 to 40 are cytoplasmic; that stretch reads HYINANTGKSSPKAK.

This sequence belongs to the OST4 family. In terms of assembly, component of the oligosaccharyltransferase (OST) complex.

Its subcellular location is the endoplasmic reticulum membrane. Subunit of the oligosaccharyl transferase (OST) complex that catalyzes the initial transfer of a defined glycan (Glc(3)Man(9)GlcNAc(2) in eukaryotes) from the lipid carrier dolichol-pyrophosphate to an asparagine residue within an Asn-X-Ser/Thr consensus motif in nascent polypeptide chains, the first step in protein N-glycosylation. N-glycosylation occurs cotranslationally and the complex associates with the Sec61 complex at the channel-forming translocon complex that mediates protein translocation across the endoplasmic reticulum (ER). All subunits are required for a maximal enzyme activity. In Drosophila persimilis (Fruit fly), this protein is Dolichyl-diphosphooligosaccharide--protein glycosyltransferase subunit 4.